A 762-amino-acid chain; its full sequence is ABC-type oligopeptide transporter ABCB9 (762 aa).

Transmembrane regions (helical) follow at residues 7-27, 47-67, 84-104, 116-136, 181-201, 221-241, 315-335, and 412-432; these read VVVTLAFVSMDVGVTTAIYAF, VLDLWAACLYRSCLLLGATIG, LVITLVCLFVGIYAMAKLLLF, FWALFVWTYISLAASFLLWGL, VAFLVAASFFLIVAALGETFL, FTTAVVVVCLLAIGSSLAAGI, VFMFSLSWQLSLVTFMGFPII, and SGLTLLVVQVSILYYGGHLVI. Residues 184–467 form the ABC transmembrane type-1 domain; the sequence is LVAASFFLIV…VGSVYSGLMQ (284 aa). Residues 500 to 736 form the ABC transporter domain; that stretch reads VDFENVTFTY…GGLYAKLVQR (237 aa). 535–542 lines the ATP pocket; it reads GPSGSGKS.

The protein belongs to the ABC transporter superfamily. ABCB family. MHC peptide exporter (TC 3.A.1.209) subfamily. In terms of assembly, homodimer. Interacts (via TMD0 region) with LAMP1; this interaction strongly stabilizes ABCB9 and protects ABCB9 against lysosomal degradation. Interacts (via TMD0 region) with LAMP2 (isoform LAMP-2B). Interacts (via TMD0) with YIF1B; this interaction allows (but is not essential) the ER-to-Golgi trafficking and strongly depends on a salt bridge within TMD0. As to expression, found in testis, particularly in the Sertoli cells of the seminiferous tubules. Also expressed in kidney, brain, heart, lung, spleen, thymus, intestine and testis. Higher expression detected in brain and testis than in thymus and intestine.

The protein localises to the lysosome membrane. The enzyme catalyses a [oligopeptide](in) + ATP + H2O = a [oligopeptide](out) + ADP + phosphate + H(+). In terms of biological role, ATP-dependent low-affinity peptide transporter which translocates a broad spectrum of peptides from the cytosol to the lysosomal lumen for degradation. Displays a broad peptide length specificity from 6-mer up to at least 59-mer peptides with an optimum of 23-mers. Binds and transports smaller and larger peptides with the same affinity. Favors positively charged, aromatic or hydrophobic residues in the N- and C-terminal positions whereas negatively charged residues as well as asparagine and methionine are not favored. The protein is ABC-type oligopeptide transporter ABCB9 of Rattus norvegicus (Rat).